A 140-amino-acid chain; its full sequence is 3-hydroxyacyl-[acyl-carrier-protein] dehydratase FabZ (140 aa).

Residue His-48 is part of the active site.

This sequence belongs to the thioester dehydratase family. FabZ subfamily.

The protein localises to the cytoplasm. The catalysed reaction is a (3R)-hydroxyacyl-[ACP] = a (2E)-enoyl-[ACP] + H2O. Functionally, involved in unsaturated fatty acids biosynthesis. Catalyzes the dehydration of short chain beta-hydroxyacyl-ACPs and long chain saturated and unsaturated beta-hydroxyacyl-ACPs. This Caldicellulosiruptor bescii (strain ATCC BAA-1888 / DSM 6725 / KCTC 15123 / Z-1320) (Anaerocellum thermophilum) protein is 3-hydroxyacyl-[acyl-carrier-protein] dehydratase FabZ.